A 342-amino-acid polypeptide reads, in one-letter code: Dihydroorotase (342 aa).

Positions 13 and 15 each coordinate Zn(2+). Substrate is bound by residues 15-17 (HLR) and asparagine 41. Residues lysine 98, histidine 135, and histidine 173 each coordinate Zn(2+). Position 98 is an N6-carboxylysine (lysine 98). Histidine 135 is a substrate binding site. Substrate is bound at residue leucine 218. Aspartate 246 contributes to the Zn(2+) binding site. Aspartate 246 is an active-site residue. Residues histidine 250 and alanine 262 each contribute to the substrate site.

It belongs to the metallo-dependent hydrolases superfamily. DHOase family. Class II DHOase subfamily. In terms of assembly, homodimer. Zn(2+) is required as a cofactor.

The enzyme catalyses (S)-dihydroorotate + H2O = N-carbamoyl-L-aspartate + H(+). It participates in pyrimidine metabolism; UMP biosynthesis via de novo pathway; (S)-dihydroorotate from bicarbonate: step 3/3. Its function is as follows. Catalyzes the reversible cyclization of carbamoyl aspartate to dihydroorotate. The polypeptide is Dihydroorotase (Photobacterium profundum (strain SS9)).